The chain runs to 150 residues: Large ribosomal subunit protein bL9 (150 aa).

Belongs to the bacterial ribosomal protein bL9 family.

Binds to the 23S rRNA. In Stenotrophomonas maltophilia (strain R551-3), this protein is Large ribosomal subunit protein bL9.